A 164-amino-acid chain; its full sequence is UPF0262 protein Saro_0143 (164 aa).

This sequence belongs to the UPF0262 family.

This Novosphingobium aromaticivorans (strain ATCC 700278 / DSM 12444 / CCUG 56034 / CIP 105152 / NBRC 16084 / F199) protein is UPF0262 protein Saro_0143.